A 673-amino-acid chain; its full sequence is Capsid protein (673 aa).

The interval 575 to 595 (NLPTDSSLESDSDSEPAPKKK) is disordered.

The protein belongs to the anelloviridae capsid protein family.

It is found in the virion. Functionally, self-assembles to form an icosahedral capsid with a T=1 symmetry, about 30 nm in diameter, and consisting of 60 capsid proteins. The capsid encapsulates the genomic DNA. Capsid protein is involved in attachment and entry into the host cell. The polypeptide is Capsid protein (Homo sapiens (Human)).